The primary structure comprises 263 residues: Endonuclease 8 (263 aa).

Catalysis depends on proline 2, which acts as the Schiff-base intermediate with DNA. Glutamate 3 functions as the Proton donor in the catalytic mechanism. The active-site Proton donor; for beta-elimination activity is the lysine 53. Residues glutamine 70, arginine 125, and asparagine 169 each coordinate DNA. Residues 229–263 (KVFHRDGEPCERCGSIIEKTTLSSRPFYWCPGCQH) form an FPG-type zinc finger. The Proton donor; for delta-elimination activity role is filled by arginine 253.

The protein belongs to the FPG family. Zn(2+) is required as a cofactor.

It catalyses the reaction 2'-deoxyribonucleotide-(2'-deoxyribose 5'-phosphate)-2'-deoxyribonucleotide-DNA = a 3'-end 2'-deoxyribonucleotide-(2,3-dehydro-2,3-deoxyribose 5'-phosphate)-DNA + a 5'-end 5'-phospho-2'-deoxyribonucleoside-DNA + H(+). Its function is as follows. Involved in base excision repair of DNA damaged by oxidation or by mutagenic agents. Acts as a DNA glycosylase that recognizes and removes damaged bases. Has a preference for oxidized pyrimidines, such as thymine glycol, 5,6-dihydrouracil and 5,6-dihydrothymine. Has AP (apurinic/apyrimidinic) lyase activity and introduces nicks in the DNA strand. Cleaves the DNA backbone by beta-delta elimination to generate a single-strand break at the site of the removed base with both 3'- and 5'-phosphates. The polypeptide is Endonuclease 8 (Shigella sonnei (strain Ss046)).